The chain runs to 445 residues: MTRKYFGTDGIRGLVGEGPITPDFMLKLGWAAGRVLMDRFDGSNMILIGKDTRISGYMFESALQAGLINAGVDVGLLGPMPTPGVAYLTRTFQAQAGIVISASHNSYVDNGIKFFGGNGTKLPDDLEDLIEKQLEQPMVTAEKLGKAKRIQDASGRYIEFCKGTMPWGFNLKGMHLVIDCAHGATYNIAPNVFSELGAHVTPIFVDPNGTNINRGCGSTKPEALQEKVVELGADLGIAFDGDGDRVVFVDHKGELVDGDELLYIIAAYQQEYAGGCDGVVGTLMSNFGFELGLKKLGIPFARAKVGDRYVIEMMRERGWRLGGENSGHIVCSNVTTTGDGIISALQVLLAITTLGQKLHKIKKGMAKLPQVMINVHMAKRADLANNETIQRAVKLTEEKLGGSGRVLLRPSGTEPVVRVMVEGEDKAQVKELAQELASVVEAALS.

Ser-103 functions as the Phosphoserine intermediate in the catalytic mechanism. Ser-103, Asp-240, Asp-242, and Asp-244 together coordinate Mg(2+). Ser-103 is subject to Phosphoserine.

The protein belongs to the phosphohexose mutase family. Mg(2+) serves as cofactor. Activated by phosphorylation.

The enzyme catalyses alpha-D-glucosamine 1-phosphate = D-glucosamine 6-phosphate. Functionally, catalyzes the conversion of glucosamine-6-phosphate to glucosamine-1-phosphate. This is Phosphoglucosamine mutase from Cellvibrio japonicus (strain Ueda107) (Pseudomonas fluorescens subsp. cellulosa).